The following is a 69-amino-acid chain: Putative membrane protein insertion efficiency factor (69 aa).

Belongs to the UPF0161 family.

It is found in the cell inner membrane. Could be involved in insertion of integral membrane proteins into the membrane. The sequence is that of Putative membrane protein insertion efficiency factor from Laribacter hongkongensis (strain HLHK9).